A 963-amino-acid polypeptide reads, in one-letter code: Integrator complex subunit 4 (963 aa).

Residue K26 is modified to N6-acetyllysine. 8 HEAT repeats span residues 66–105 (AESV…TAGF), 145–183 (QAIQ…LEKS), 190–228 (GLAA…RGLK), 229–263 (LHQT…SQLY), 277–313 (IRLV…EQVS), 369–405 (NLIE…AQSS), 406–444 (PSFA…NITL), and 446–484 (EDQL…GIHL). A Glycyl lysine isopeptide (Lys-Gly) (interchain with G-Cter in SUMO1); alternate cross-link involves residue K791. A Glycyl lysine isopeptide (Lys-Gly) (interchain with G-Cter in SUMO2); alternate cross-link involves residue K791.

This sequence belongs to the Integrator subunit 4 family. As to quaternary structure, component of the Integrator complex, composed of core subunits INTS1, INTS2, INTS3, INTS4, INTS5, INTS6, INTS7, INTS8, INTS9/RC74, INTS10, INTS11/CPSF3L, INTS12, INTS13, INTS14 and INTS15. The core complex associates with protein phosphatase 2A subunits PPP2CA and PPP2R1A, to form the Integrator-PP2A (INTAC) complex. INTS4 is part of the RNA endonuclease subcomplex, composed of INTS4, INTS9, INTS11 and inositol hexakisphosphate (InsP6). Interacts with BRAT1; interaction is required for the assembly of the RNA endonuclease subcomplex.

Its subcellular location is the nucleus. The protein resides in the cytoplasm. In terms of biological role, component of the integrator complex, a multiprotein complex that terminates RNA polymerase II (Pol II) transcription in the promoter-proximal region of genes. The integrator complex provides a quality checkpoint during transcription elongation by driving premature transcription termination of transcripts that are unfavorably configured for transcriptional elongation: the complex terminates transcription by (1) catalyzing dephosphorylation of the C-terminal domain (CTD) of Pol II subunit POLR2A/RPB1 and SUPT5H/SPT5, (2) degrading the exiting nascent RNA transcript via endonuclease activity and (3) promoting the release of Pol II from bound DNA. The integrator complex is also involved in terminating the synthesis of non-coding Pol II transcripts, such as enhancer RNAs (eRNAs), small nuclear RNAs (snRNAs), telomerase RNAs and long non-coding RNAs (lncRNAs). Within the integrator complex, INTS4 acts as an scaffold that links INTS9 and INTS11. Mediates recruitment of cytoplasmic dynein to the nuclear envelope, probably as component of the integrator complex. The polypeptide is Integrator complex subunit 4 (Homo sapiens (Human)).